The sequence spans 490 residues: Coagulation factor X (490 aa).

The signal sequence occupies residues 1–20 (MANPLHLVLLGAALAGLLLS). A propeptide spanning residues 21–40 (GSSVFISRRAANDVLARTRR) is cleaved from the precursor. The region spanning 41–85 (ANSFLEELKKGNLERECMEENCSYEEALEVFEDREKTNEFWNKYV) is the Gla domain. Residues E46, E47, E54, E56, E59, and E60 each carry the 4-carboxyglutamate modification. C57 and C62 are joined by a disulfide. N61 carries an N-linked (GlcNAc...) asparagine glycan. 6 positions are modified to 4-carboxyglutamate: E65, E66, E69, E72, E75, and E79. Positions 86 to 122 (DGDQCESNPCQNQGTCKDGLGMYTCSCVEGYEGQDCE) constitute an EGF-like 1; calcium-binding domain. 11 cysteine pairs are disulfide-bonded: C90/C101, C95/C110, C112/C121, C129/C140, C136/C149, C151/C164, C172/C340, C239/C244, C259/C275, C388/C402, and C413/C441. D103 carries the post-translational modification (3R)-3-hydroxyaspartate. The EGF-like 2 domain occupies 125–165 (TRKLCSLDNGGCDQFCKEEENSVLCSCASGYTLGDNGKSCI). The interval 183–230 (SPATNSSEGPPEAPGPEQQDDGNLTATENPFNLLDSPEPPPEDDSSSL) is disordered. A propeptide spans 184-232 (PATNSSEGPPEAPGPEQQDDGNLTATENPFNLLDSPEPPPEDDSSSLVR) (activation peptide). N-linked (GlcNAc...) asparagine glycosylation is found at N187 and N205. Residues 203 to 212 (DGNLTATENP) show a composition bias toward polar residues. The region spanning 233 to 465 (IVGGQDCRDG…FLKWIEKSMR (233 aa)) is the Peptidase S1 domain. Catalysis depends on charge relay system residues H274 and D320. S417 serves as the catalytic Charge relay system.

Belongs to the peptidase S1 family. The two chains are formed from a single-chain precursor by the excision of two Arg residues and are held together by 1 or more disulfide bonds. Forms a heterodimer with SERPINA5. In terms of processing, the vitamin K-dependent, enzymatic carboxylation of some glutamate residues allows the modified protein to bind calcium. Post-translationally, N- and O-glycosylated. Proteolytically cleaved and activated by cathepsin CTSG. The activation peptide is cleaved by factor IXa (in the intrinsic pathway), or by factor VIIa (in the extrinsic pathway). In terms of processing, the iron and 2-oxoglutarate dependent 3-hydroxylation of aspartate and asparagine is (R) stereospecific within EGF domains.

Its subcellular location is the secreted. It carries out the reaction Selective cleavage of Arg-|-Thr and then Arg-|-Ile bonds in prothrombin to form thrombin.. With respect to regulation, inhibited by SERPINA5. Its function is as follows. Factor Xa is a vitamin K-dependent glycoprotein that converts prothrombin to thrombin in the presence of factor Va, calcium and phospholipid during blood clotting. Factor Xa activates pro-inflammatory signaling pathways in a protease-activated receptor (PAR)-dependent manner. This is Coagulation factor X (F10) from Oryctolagus cuniculus (Rabbit).